We begin with the raw amino-acid sequence, 554 residues long: 7-epi-sesquithujene synthase (554 aa).

Mg(2+) is bound by residues D308 and D312. Positions 308, 312, 449, and 452 each coordinate substrate. The short motif at 308–312 (DDMFD) is the DDXXD motif element. Mg(2+) contacts are provided by N452, S456, and E460.

Belongs to the terpene synthase family. As to quaternary structure, monomer. Mg(2+) is required as a cofactor. It depends on Mn(2+) as a cofactor. In terms of tissue distribution, highly expressed in the husk. Detected in leaf sheaths and leaves.

Its subcellular location is the cytoplasm. It catalyses the reaction (2E,6E)-farnesyl diphosphate = 7-epi-sesquithujene + diphosphate. The catalysed reaction is (2E,6E)-farnesyl diphosphate = (1S,5S,6R)-alpha-bergamotene + diphosphate. The enzyme catalyses (2E,6E)-farnesyl diphosphate = (E)-beta-farnesene + diphosphate. It carries out the reaction (2E,6E)-farnesyl diphosphate = (S)-beta-bisabolene + diphosphate. It catalyses the reaction (2Z,6E)-farnesyl diphosphate = (-)-beta-curcumene + diphosphate. The catalysed reaction is (2E,6E)-farnesyl diphosphate = gamma-curcumene + diphosphate. The enzyme catalyses (2E,6E)-farnesyl diphosphate = sesquisabinene A + diphosphate. Its pathway is secondary metabolite biosynthesis; terpenoid biosynthesis. Its function is as follows. Sesquiterpene synthase involved in the production after herbivore attack of a blend of volatiles that attracts natural enemies of herbivores. Converts farnesyl diphosphate to (S)-beta-bisabolene and 7-epi-sesquithujene, along with a mixture of more than 20 other minor sesquiterpene olefins. Can also act in vitro as a monoterpene synthase, converting geranyl diphosphate to (S)-(-)-limonene, beta-myrcene and 11 other monoterpenes. This chain is 7-epi-sesquithujene synthase, found in Zea mays (Maize).